The sequence spans 49 residues: MAVKKAALACSVCGSRNYSITANSNRTKRLELNKFCKHCGKKTLHKETR.

This sequence belongs to the bacterial ribosomal protein bL33 family.

The sequence is that of Large ribosomal subunit protein bL33B from Lactobacillus delbrueckii subsp. bulgaricus (strain ATCC BAA-365 / Lb-18).